Consider the following 201-residue polypeptide: Alanine--tRNA ligase (201 aa).

This sequence belongs to the class-II aminoacyl-tRNA synthetase family. It depends on Zn(2+) as a cofactor.

It is found in the cytoplasm. It carries out the reaction tRNA(Ala) + L-alanine + ATP = L-alanyl-tRNA(Ala) + AMP + diphosphate. Its function is as follows. Catalyzes the attachment of alanine to tRNA(Ala) in a two-step reaction: alanine is first activated by ATP to form Ala-AMP and then transferred to the acceptor end of tRNA(Ala). Also edits incorrectly charged Ser-tRNA(Ala) and Gly-tRNA(Ala) via its editing domain. In Rhizobium leguminosarum bv. viciae, this protein is Alanine--tRNA ligase (alaS).